The chain runs to 127 residues: Putative defensin-like protein 180 (127 aa).

The signal sequence occupies residues 1 to 26; that stretch reads MERITSLVFFASFLIIFVSGVNQTRA. 8 disulfide bridges follow: Cys-29–Cys-70, Cys-36–Cys-55, Cys-39–Cys-64, Cys-43–Cys-66, Cys-81–Cys-127, Cys-92–Cys-112, Cys-97–Cys-121, and Cys-101–Cys-123.

Belongs to the DEFL family.

The protein resides in the secreted. In Arabidopsis thaliana (Mouse-ear cress), this protein is Putative defensin-like protein 180 (LCR58).